The chain runs to 478 residues: Proton-coupled amino acid transporter 2 (478 aa).

Polar residues-rich tracts occupy residues 1–14 (MSVT…QVAT) and 26–37 (KLQSQDPSPANG). Positions 1 to 46 (MSVTKSARSPQVATPLNLDLPESAKKLQSQDPSPANGSSSESSKKT) are disordered. Residues 1–53 (MSVTKSARSPQVATPLNLDLPESAKKLQSQDPSPANGSSSESSKKTKGITGFQ) lie on the Cytoplasmic side of the membrane. The chain crosses the membrane as a helical span at residues 54 to 74 (TLVHLVKGNMGTGILGLPLAV). Residues 75-76 (KN) are Extracellular-facing. The helical transmembrane segment at 77–97 (AGILMGPLSLLVMGLIACHCM) threads the bilayer. Over 98–143 (HILVRCAQRFCHRLNKPFMDYGDTVMHGLAFSPNAWLQNHAHWGRR) the chain is Cytoplasmic. A helical transmembrane segment spans residues 144–164 (VVSFFLIVTQLGFCCVYIVFL). At 165–192 (ADNLKQVVEAVNSTTISCHKNETVVLTP) the chain is on the extracellular side. Residues 193–213 (TMDSRLYMLSFLPVLGLLVFV) form a helical membrane-spanning segment. The Cytoplasmic portion of the chain corresponds to 214-217 (RNLR). A helical transmembrane segment spans residues 218-238 (VLTIFSLLANISMLVSLVIIA). Topologically, residues 239-259 (QYIIQEIPDASQLPLVASWKT) are extracellular. Residues 260–280 (YPLFFGTAIFSFESIGVVLPL) traverse the membrane as a helical segment. Over 281-292 (ENKMKDARGFPT) the chain is Cytoplasmic. The helical transmembrane segment at 293-313 (ILSLGMSIITTLYIAIGALGY) threads the bilayer. The Extracellular portion of the chain corresponds to 314 to 340 (LRFGDDIKASITLNLPNCWLYQSVKLL). A helical membrane pass occupies residues 341–361 (YVVGILCTYALQFYVPAEIII). Over 362–374 (PLAVSQVSKRWAL) the chain is Cytoplasmic. The chain crosses the membrane as a helical span at residues 375–395 (PVDLSIRLALVCLTCMLAILI). The Extracellular portion of the chain corresponds to 396–399 (PRLD). A helical transmembrane segment spans residues 400–420 (LVLSLVGSVSSSALALIIPPL). The Cytoplasmic segment spans residues 421–441 (LEVVTYYGEGISPLTVTKDAL). A helical membrane pass occupies residues 442-462 (ISILGFMGFVVGTYQALDELI). Over 463–478 (KSGNSPALSNSTMFIQ) the chain is Extracellular.

Belongs to the amino acid/polyamine transporter 2 family. In terms of tissue distribution, expressed in spinal cord, brain, testis, lung, heart, colon, spleen, kidney and muscle. Found in neuronal cell bodies in the anterior horn, in spinal cord brain stem, cerebellum, hippocampus, hypothalamus, rhinencephalon, cerebral cortex, and olfactory bulb in the brain. Also expressed in bone and fat tissues.

Its subcellular location is the cell membrane. The protein localises to the endoplasmic reticulum membrane. It is found in the recycling endosome membrane. The catalysed reaction is glycine(in) + H(+)(in) = glycine(out) + H(+)(out). It catalyses the reaction L-alanine(in) + H(+)(in) = L-alanine(out) + H(+)(out). The enzyme catalyses D-alanine(in) + H(+)(in) = D-alanine(out) + H(+)(out). It carries out the reaction L-proline(out) + H(+)(out) = L-proline(in) + H(+)(in). The catalysed reaction is D-proline(out) + H(+)(out) = D-proline(in) + H(+)(in). It catalyses the reaction 4-hydroxy-L-proline(in) + H(+)(in) = 4-hydroxy-L-proline(out) + H(+)(out). The enzyme catalyses L-serine(in) + H(+)(in) = L-serine(out) + H(+)(out). It carries out the reaction D-serine(out) + H(+)(out) = D-serine(in) + H(+)(in). The catalysed reaction is beta-alanine(in) + H(+)(in) = beta-alanine(out) + H(+)(out). It catalyses the reaction 4-aminobutanoate(in) + H(+)(in) = 4-aminobutanoate(out) + H(+)(out). The enzyme catalyses sarcosine(in) + H(+)(in) = sarcosine(out) + H(+)(out). It carries out the reaction N,N-dimethylglycine(in) + H(+)(in) = N,N-dimethylglycine(out) + H(+)(out). Its function is as follows. Electrogenic proton/amino acid symporter with a high selectivity for the small side chains amino acids glycine, alanine and proline, where both L- and D-enantiomers are transported. Extension of the backbone length, as in beta-alanine and 4-aminobutanoate or methylation of the amino group, as in sarcosine and N,N-dimethylglycine, are also tolerated but decrease transport efficiency. A free carboxyl group is preferred. The chain is Proton-coupled amino acid transporter 2 from Mus musculus (Mouse).